The sequence spans 320 residues: ATP-dependent 6-phosphofructokinase (320 aa).

G12 contacts ATP. ADP contacts are provided by residues 22–26 (RGVVR) and 55–60 (RYSVSD). Residues 73 to 74 (RF) and 103 to 106 (GDGS) contribute to the ATP site. Mg(2+) is bound at residue D104. 126–128 (TID) lines the substrate pocket. D128 serves as the catalytic Proton acceptor. R155 contacts ADP. Residues R163 and 170-172 (MGR) contribute to the substrate site. ADP-binding positions include 186–188 (GCE), K212, and 214–216 (KKH). Substrate contacts are provided by residues E223, R244, and 250 to 253 (HIQR).

The protein belongs to the phosphofructokinase type A (PFKA) family. ATP-dependent PFK group I subfamily. Prokaryotic clade 'B1' sub-subfamily. Homotetramer. It depends on Mg(2+) as a cofactor.

The protein localises to the cytoplasm. The catalysed reaction is beta-D-fructose 6-phosphate + ATP = beta-D-fructose 1,6-bisphosphate + ADP + H(+). Its pathway is carbohydrate degradation; glycolysis; D-glyceraldehyde 3-phosphate and glycerone phosphate from D-glucose: step 3/4. With respect to regulation, allosterically activated by ADP and other diphosphonucleosides, and allosterically inhibited by phosphoenolpyruvate. Catalyzes the phosphorylation of D-fructose 6-phosphate to fructose 1,6-bisphosphate by ATP, the first committing step of glycolysis. This is ATP-dependent 6-phosphofructokinase from Cronobacter sakazakii (strain ATCC BAA-894) (Enterobacter sakazakii).